The primary structure comprises 152 residues: Biotin carboxyl carrier protein of acetyl-CoA carboxylase (152 aa).

One can recognise a Biotinyl-binding domain in the interval 72–148 (IIDILSPISG…TKNQVLMKII (77 aa)). K114 bears the N6-biotinyllysine mark.

It is found in the plastid. It localises to the chloroplast. Its pathway is lipid metabolism; fatty acid biosynthesis. Its function is as follows. This protein is a component of the acetyl coenzyme A carboxylase complex; first, biotin carboxylase catalyzes the carboxylation of the carrier protein and then the transcarboxylase transfers the carboxyl group to form malonyl-CoA. In Cyanidium caldarium (Red alga), this protein is Biotin carboxyl carrier protein of acetyl-CoA carboxylase (accB).